The sequence spans 514 residues: Protein farnesyltransferase subunit beta (514 aa).

Positions 1–13 are enriched in basic residues; sequence MRHHTKNLRRRAI. Residues 1–56 form a disordered region; the sequence is MRHHTKNLRRRAIFLRTTPRGNMDSSSSVATSTSSSSNHRLVRSSEGSPSAGGDDI. A compositionally biased stretch (low complexity) spans 25-39; that stretch reads SSSSVATSTSSSSNH. PFTB repeat units lie at residues 180–221, 231–272, 293–334, 346–388, and 410–454; these read AESL…AVVG, RRAL…SLLN, FTGL…SLLG, IERL…PLIE, and REGL…SSAQ. Residues 319–322 and 367–370 contribute to the (2E,6E)-farnesyl diphosphate site; these read HGAY and RTNK. The Zn(2+) site is built by Asp373 and Cys375. Position 376–379 (376–379) interacts with (2E,6E)-farnesyl diphosphate; sequence YSHW. Residue His442 participates in Zn(2+) binding.

It belongs to the protein prenyltransferase subunit beta family. In terms of assembly, heterodimer of an alpha and a beta subunit. Interacts with RAS1 and RAS2. It depends on Zn(2+) as a cofactor. In terms of tissue distribution, highly expressed in mycelium, conidium, conidial germination, early formed appressorium and the late infection hypha.

The protein resides in the cytoplasm. The enzyme catalyses L-cysteinyl-[protein] + (2E,6E)-farnesyl diphosphate = S-(2E,6E)-farnesyl-L-cysteinyl-[protein] + diphosphate. Its function is as follows. Catalyzes the transfer of a farnesyl moiety from farnesyl diphosphate to a cysteine at the fourth position from the C-terminus of several proteins having the C-terminal sequence Cys-aliphatic-aliphatic-X. The beta subunit is responsible for peptide-binding. The protein is Protein farnesyltransferase subunit beta (RAM1) of Pyricularia oryzae (strain 70-15 / ATCC MYA-4617 / FGSC 8958) (Rice blast fungus).